The chain runs to 293 residues: MAAITASMVAELRAKTDAPMMECKKALTEADGDLAKAEELLRVKLGNKASKAASRVTAEGVVASFVGGNAGALVELNCETDFVAKNDDFLAFSKTVAELVATQNPADVAALSALPLDGSTVDAVRLALIGKIGENVSIRRFVRFETANKIATYLHGARIGVIVEYTGADEQVGKDVAMHIAAMKPVALSSADVPAELIETERRVAEQKAAESGKPAEIVAKMVDGSVQKYLKEVSLLNQTFVKNDKQTIEQMLKAANAAVQKFALFVVGEGIEKRQDDFAAEVAAQVAAAKQQ.

Residues 80-83 (TDFV) are involved in Mg(2+) ion dislocation from EF-Tu.

The protein belongs to the EF-Ts family.

It is found in the cytoplasm. Its function is as follows. Associates with the EF-Tu.GDP complex and induces the exchange of GDP to GTP. It remains bound to the aminoacyl-tRNA.EF-Tu.GTP complex up to the GTP hydrolysis stage on the ribosome. The polypeptide is Elongation factor Ts (Burkholderia cenocepacia (strain ATCC BAA-245 / DSM 16553 / LMG 16656 / NCTC 13227 / J2315 / CF5610) (Burkholderia cepacia (strain J2315))).